Reading from the N-terminus, the 95-residue chain is Large ribosomal subunit protein uL23 (95 aa).

Belongs to the universal ribosomal protein uL23 family. In terms of assembly, part of the 50S ribosomal subunit. Contacts protein L29, and trigger factor when it is bound to the ribosome.

One of the early assembly proteins it binds 23S rRNA. One of the proteins that surrounds the polypeptide exit tunnel on the outside of the ribosome. Forms the main docking site for trigger factor binding to the ribosome. This Leuconostoc mesenteroides subsp. mesenteroides (strain ATCC 8293 / DSM 20343 / BCRC 11652 / CCM 1803 / JCM 6124 / NCDO 523 / NBRC 100496 / NCIMB 8023 / NCTC 12954 / NRRL B-1118 / 37Y) protein is Large ribosomal subunit protein uL23.